Here is a 177-residue protein sequence, read N- to C-terminus: Plasmid transfer protein TraF (177 aa).

The signal sequence occupies residues 1–30 (MSRFQRLTKYVAIGGGAALLLAGAAYLAGA).

It belongs to the peptidase S26C family.

It localises to the periplasm. In terms of biological role, required for donor-specific phage sensitivity. May be involved in pilus assembly. The protein is Plasmid transfer protein TraF (traF) of Escherichia coli.